A 122-amino-acid chain; its full sequence is Large ribosomal subunit protein uL14 (122 aa).

Belongs to the universal ribosomal protein uL14 family. As to quaternary structure, part of the 50S ribosomal subunit. Forms a cluster with proteins L3 and L19. In the 70S ribosome, L14 and L19 interact and together make contacts with the 16S rRNA in bridges B5 and B8.

In terms of biological role, binds to 23S rRNA. Forms part of two intersubunit bridges in the 70S ribosome. This Myxococcus xanthus (strain DK1622) protein is Large ribosomal subunit protein uL14.